Here is a 352-residue protein sequence, read N- to C-terminus: Photosystem II D2 protein 2 (352 aa).

The chain crosses the membrane as a helical span at residues cysteine 40–threonine 60. Residue histidine 117 coordinates chlorophyll a. A helical membrane pass occupies residues glycine 124–proline 140. Positions 129 and 142 each coordinate pheophytin a. The chain crosses the membrane as a helical span at residues valine 152–serine 165. Histidine 197 is a chlorophyll a binding site. A helical membrane pass occupies residues glycine 207–glutamate 227. Histidine 214 and phenylalanine 261 together coordinate a plastoquinone. Histidine 214 serves as a coordination point for Fe cation. Fe cation is bound at residue histidine 268. The helical transmembrane segment at glycine 278 to arginine 294 threads the bilayer.

Belongs to the reaction center PufL/M/PsbA/D family. As to quaternary structure, PSII is composed of 1 copy each of membrane proteins PsbA, PsbB, PsbC, PsbD, PsbE, PsbF, PsbH, PsbI, PsbJ, PsbK, PsbL, PsbM, PsbT, PsbX, PsbY, PsbZ, Psb30/Ycf12, peripheral proteins PsbO, CyanoQ (PsbQ), PsbU, PsbV and a large number of cofactors. It forms dimeric complexes. The cofactor is The D1/D2 heterodimer binds P680, chlorophylls that are the primary electron donor of PSII, and subsequent electron acceptors. It shares a non-heme iron and each subunit binds pheophytin, quinone, additional chlorophylls, carotenoids and lipids. There is also a Cl(-1) ion associated with D1 and D2, which is required for oxygen evolution. The PSII complex binds additional chlorophylls, carotenoids and specific lipids..

The protein resides in the cellular thylakoid membrane. It catalyses the reaction 2 a plastoquinone + 4 hnu + 2 H2O = 2 a plastoquinol + O2. Photosystem II (PSII) is a light-driven water:plastoquinone oxidoreductase that uses light energy to abstract electrons from H(2)O, generating O(2) and a proton gradient subsequently used for ATP formation. It consists of a core antenna complex that captures photons, and an electron transfer chain that converts photonic excitation into a charge separation. The D1/D2 (PsbA/PsbD) reaction center heterodimer binds P680, the primary electron donor of PSII as well as several subsequent electron acceptors. D2 is needed for assembly of a stable PSII complex. The polypeptide is Photosystem II D2 protein 2 (Synechococcus sp. (strain ATCC 27144 / PCC 6301 / SAUG 1402/1) (Anacystis nidulans)).